Consider the following 272-residue polypeptide: Protein FAM210A (272 aa).

The region spanning 117–229 (DKSISLYQRF…GYMSTPPPVK (113 aa)) is the DUF1279 domain. The helical transmembrane segment at 136-156 (VLIPVHLITSGVWFGTFYYAA) threads the bilayer. Residues 229 to 271 (KEYLQDRMEETKELITEKMEETKDRLTEKLQETKEKVSFKKKV) adopt a coiled-coil conformation. Residues 246–272 (KMEETKDRLTEKLQETKEKVSFKKKVE) are disordered.

Belongs to the FAM210 family. In terms of assembly, interacts with ATAD3A.

It localises to the membrane. The protein resides in the mitochondrion. The protein localises to the cytoplasm. Functionally, may play a role in the structure and strength of both muscle and bone. This is Protein FAM210A (FAM210A) from Pongo abelii (Sumatran orangutan).